Reading from the N-terminus, the 427-residue chain is Glutamate-1-semialdehyde 2,1-aminomutase (427 aa).

Position 265 is an N6-(pyridoxal phosphate)lysine (Lys-265).

The protein belongs to the class-III pyridoxal-phosphate-dependent aminotransferase family. HemL subfamily. As to quaternary structure, homodimer. Requires pyridoxal 5'-phosphate as cofactor.

The protein localises to the cytoplasm. It catalyses the reaction (S)-4-amino-5-oxopentanoate = 5-aminolevulinate. The protein operates within porphyrin-containing compound metabolism; protoporphyrin-IX biosynthesis; 5-aminolevulinate from L-glutamyl-tRNA(Glu): step 2/2. The polypeptide is Glutamate-1-semialdehyde 2,1-aminomutase (Teredinibacter turnerae (strain ATCC 39867 / T7901)).